We begin with the raw amino-acid sequence, 160 residues long: Large ribosomal subunit protein uL22c (160 aa).

It belongs to the universal ribosomal protein uL22 family. As to quaternary structure, part of the 50S ribosomal subunit.

Its subcellular location is the plastid. It localises to the chloroplast. In terms of biological role, this protein binds specifically to 23S rRNA. Functionally, the globular domain of the protein is located near the polypeptide exit tunnel on the outside of the subunit, while an extended beta-hairpin is found that lines the wall of the exit tunnel in the center of the 70S ribosome. This is Large ribosomal subunit protein uL22c (rpl22) from Arabis hirsuta (Hairy rock-cress).